The sequence spans 739 residues: Thiamine biosynthesis multifunctional protein ThiED (739 aa).

A thiamine-phosphate synthase region spans residues 1 to 210 (MTDFSLYLVT…PSPAEAAREL (210 aa)). Residues 37–41 (QLRDK) and asparagine 69 each bind 4-amino-2-methyl-5-(diphosphooxymethyl)pyrimidine. Aspartate 70 and aspartate 88 together coordinate Mg(2+). Position 107 (threonine 107) interacts with 4-amino-2-methyl-5-(diphosphooxymethyl)pyrimidine. 140 to 142 (TDT) lines the 2-[(2R,5Z)-2-carboxy-4-methylthiazol-5(2H)-ylidene]ethyl phosphate pocket. Lysine 143 lines the 4-amino-2-methyl-5-(diphosphooxymethyl)pyrimidine pocket. 2-[(2R,5Z)-2-carboxy-4-methylthiazol-5(2H)-ylidene]ethyl phosphate contacts are provided by residues glycine 174 and 194–195 (VS). The hydroxymethylpyrimidine/phosphomethylpyrimidine kinase stretch occupies residues 226–481 (LTIAGTDPTG…GSGSGPVDHF (256 aa)). Glutamine 263 provides a ligand contact to 4-amino-5-hydroxymethyl-2-methylpyrimidine. Residues 527-739 (YTRALWEATG…FDQATRQGWN (213 aa)) form a thiaminase-2 region.

The protein in the N-terminal section; belongs to the thiamine-phosphate synthase family. This sequence in the central section; belongs to the ThiD family. In the C-terminal section; belongs to the thiaminase-2 family. Mg(2+) is required as a cofactor.

The catalysed reaction is 2-[(2R,5Z)-2-carboxy-4-methylthiazol-5(2H)-ylidene]ethyl phosphate + 4-amino-2-methyl-5-(diphosphooxymethyl)pyrimidine + 2 H(+) = thiamine phosphate + CO2 + diphosphate. The enzyme catalyses 2-(2-carboxy-4-methylthiazol-5-yl)ethyl phosphate + 4-amino-2-methyl-5-(diphosphooxymethyl)pyrimidine + 2 H(+) = thiamine phosphate + CO2 + diphosphate. It catalyses the reaction 4-methyl-5-(2-phosphooxyethyl)-thiazole + 4-amino-2-methyl-5-(diphosphooxymethyl)pyrimidine + H(+) = thiamine phosphate + diphosphate. It carries out the reaction 4-amino-5-hydroxymethyl-2-methylpyrimidine + ATP = 4-amino-2-methyl-5-(phosphooxymethyl)pyrimidine + ADP + H(+). The catalysed reaction is 4-amino-2-methyl-5-(phosphooxymethyl)pyrimidine + ATP = 4-amino-2-methyl-5-(diphosphooxymethyl)pyrimidine + ADP. It participates in cofactor biosynthesis; thiamine diphosphate biosynthesis; 4-amino-2-methyl-5-diphosphomethylpyrimidine from 5-amino-1-(5-phospho-D-ribosyl)imidazole: step 3/3. The protein operates within cofactor biosynthesis; thiamine diphosphate biosynthesis; thiamine phosphate from 4-amino-2-methyl-5-diphosphomethylpyrimidine and 4-methyl-5-(2-phosphoethyl)-thiazole: step 1/1. Its function is as follows. Condenses 4-methyl-5-(beta-hydroxyethyl)thiazole monophosphate (THZ-P) and 2-methyl-4-amino-5-hydroxymethyl pyrimidine pyrophosphate (HMP-PP) to form thiamine monophosphate (TMP). Functionally, catalyzes the phosphorylation of hydroxymethylpyrimidine phosphate (HMP-P) to HMP-PP, and of HMP to HMP-P. This is Thiamine biosynthesis multifunctional protein ThiED (thiED) from Corynebacterium efficiens (strain DSM 44549 / YS-314 / AJ 12310 / JCM 11189 / NBRC 100395).